Here is a 409-residue protein sequence, read N- to C-terminus: Probable type I inositol 1,4,5-trisphosphate 5-phosphatase (409 aa).

This sequence belongs to the inositol 1,4,5-trisphosphate 5-phosphatase type I family.

It catalyses the reaction 1D-myo-inositol 1,4,5-trisphosphate + H2O = 1D-myo-inositol 1,4-bisphosphate + phosphate. It carries out the reaction 1D-myo-inositol 1,3,4,5-tetrakisphosphate + H2O = 1D-myo-inositol 1,3,4-trisphosphate + phosphate. The protein is Probable type I inositol 1,4,5-trisphosphate 5-phosphatase (ipp-5) of Caenorhabditis elegans.